Reading from the N-terminus, the 407-residue chain is 41 kDa spicule matrix protein (407 aa).

The signal sequence occupies residues 1 to 17; that stretch reads MKGVLFIVASLVAFATG. The 132-residue stretch at 29–160 folds into the C-type lectin domain; sequence SGQSCYRYFN…PGRAPVMKRQ (132 aa). 2 disordered regions span residues 143 to 176 and 204 to 407; these read PQNPMSGPPGRAPVMKRQNPPVRPGQGGRQIPQG and IGQQ…DALA. The segment covering 223-369 has biased composition (gly residues); the sequence is NQPGMGGRQP…MGGRQPGMGG (147 aa). Positions 370-398 are enriched in low complexity; it reads QQPNNPNNPNNPNNPNNPNNPNPRFNRPR.

Belongs to the SM50 family. As to expression, expressed specifically in the micromere/primary mesenchyme cells (PMC) lineage.

It is found in the secreted. Major matrix protein of the sea urchin embryo spicule which directs crystal growth in certain orientations and inhibit growth in others. The sequence is that of 41 kDa spicule matrix protein from Hemicentrotus pulcherrimus (Sea urchin).